A 304-amino-acid polypeptide reads, in one-letter code: Aquaglyceroporin-3 (304 aa).

Residues 1-68 (MQSQPDNVAY…LRLNYRDYMG (68 aa)) lie on the Cytoplasmic side of the membrane. A helical transmembrane segment spans residues 69–89 (ELLGTFVLLFMGNGVVATVII). Topologically, residues 90–95 (DGKLGF) are extracellular. Residues 96–116 (LSITLGWGIAVTMALYVSLGI) form a helical membrane-spanning segment. Residues 117–142 (SSGHLNPAVTVGNAVFGDFPWRKVPG) lie on the Cytoplasmic side of the membrane. A helical transmembrane segment spans residues 143–163 (YIAAQMLGAFLGAACAYGVFA). The Extracellular portion of the chain corresponds to 164-196 (DLLKAHGGGELIAFGEKGTAGVFSTYPRDSNGL). A helical membrane pass occupies residues 197-217 (FSCIFGEFICTAMLLFCVCGI). Over 218–231 (FDPNNSPAKGHEPL) the chain is Cytoplasmic. Residues 232–252 (AVGALVFAIGNNIGYSTGYAI) traverse the membrane as a helical segment. Topologically, residues 253-277 (NPARDFGPRVFSSFLYGGEVFSHAN) are extracellular. Residues 278 to 298 (YYFWVPLVIPLFGGIFGLFLY) form a helical membrane-spanning segment. At 299–304 (KYFVPH) the chain is on the cytoplasmic side.

It belongs to the MIP/aquaporin (TC 1.A.8) family.

The protein localises to the cell membrane. It catalyses the reaction glycerol(in) = glycerol(out). The catalysed reaction is H2O(in) = H2O(out). It carries out the reaction urea(in) = urea(out). Its function is as follows. Mediates water and glycerol transport across the cell membrane. Permeable to urea. Permeable to methylamine/methylammonium. Permeable to dihydroxyacetone. Permeable to erythritol and ribitol. This is Aquaglyceroporin-3 from Trypanosoma brucei brucei.